The primary structure comprises 501 residues: L-arabinose isomerase (501 aa).

Residues Glu-306, Glu-333, His-350, and His-450 each contribute to the Mn(2+) site.

It belongs to the arabinose isomerase family. In terms of assembly, homohexamer. Mn(2+) serves as cofactor.

The catalysed reaction is beta-L-arabinopyranose = L-ribulose. It participates in carbohydrate degradation; L-arabinose degradation via L-ribulose; D-xylulose 5-phosphate from L-arabinose (bacterial route): step 1/3. In terms of biological role, catalyzes the conversion of L-arabinose to L-ribulose. This is L-arabinose isomerase from Serratia proteamaculans (strain 568).